We begin with the raw amino-acid sequence, 356 residues long: DNA polymerase IV (356 aa).

Residues 1–188 enclose the UmuC domain; sequence MDTSRKIIHI…IPVTKFYGVG (188 aa). Residues Asp11 and Asp106 each contribute to the Mg(2+) site. Glu107 is an active-site residue.

It belongs to the DNA polymerase type-Y family. As to quaternary structure, monomer. Mg(2+) serves as cofactor.

It is found in the cytoplasm. It catalyses the reaction DNA(n) + a 2'-deoxyribonucleoside 5'-triphosphate = DNA(n+1) + diphosphate. Poorly processive, error-prone DNA polymerase involved in untargeted mutagenesis. Copies undamaged DNA at stalled replication forks, which arise in vivo from mismatched or misaligned primer ends. These misaligned primers can be extended by PolIV. Exhibits no 3'-5' exonuclease (proofreading) activity. May be involved in translesional synthesis, in conjunction with the beta clamp from PolIII. This Listeria monocytogenes serovar 1/2a (strain ATCC BAA-679 / EGD-e) protein is DNA polymerase IV.